The chain runs to 113 residues: Small ribosomal subunit protein bS18 (113 aa).

The disordered stretch occupies residues 1–41 (MSEEKIVNTEAAPEAVAERPARAERSERPERPAKGPFGKKR). Over residues 16–33 (VAERPARAERSERPERPA) the composition is skewed to basic and acidic residues.

This sequence belongs to the bacterial ribosomal protein bS18 family. As to quaternary structure, part of the 30S ribosomal subunit. Forms a tight heterodimer with protein bS6.

Its function is as follows. Binds as a heterodimer with protein bS6 to the central domain of the 16S rRNA, where it helps stabilize the platform of the 30S subunit. The sequence is that of Small ribosomal subunit protein bS18 from Elusimicrobium minutum (strain Pei191).